Here is a 415-residue protein sequence, read N- to C-terminus: Alpha-N-acetylgalactosaminidase (415 aa).

Residues 1 to 17 (MLQKTVLLLALVAQVLM) form the signal peptide. 3 disulfides stabilise this stretch: Cys-38/Cys-80, Cys-42/Cys-49, and Cys-127/Cys-158. Residues 78–79 (DD) and Lys-154 each bind substrate. Asp-156 serves as the catalytic Nucleophile. An N-linked (GlcNAc...) asparagine glycan is attached at Asn-177. An intrachain disulfide couples Cys-187 to Cys-209. Substrate is bound at residue Ser-188. The N-linked (GlcNAc...) asparagine glycan is linked to Asn-201. Residues Arg-213 and Asp-217 each coordinate substrate. The Proton donor role is filled by Asp-217. Ser-322 carries the post-translational modification Phosphoserine. N-linked (GlcNAc...) asparagine glycosylation occurs at Asn-330. The residue at position 332 (Ser-332) is a Phosphoserine. The N-linked (GlcNAc...) asparagine glycan is linked to Asn-385.

The protein belongs to the glycosyl hydrolase 27 family. In terms of assembly, homodimer.

It localises to the lysosome. The enzyme catalyses Cleavage of non-reducing alpha-(1-&gt;3)-N-acetylgalactosamine residues from human blood group A and AB mucin glycoproteins, Forssman hapten and blood group A lacto series glycolipids.. The catalysed reaction is a neolactoside IV(3)-alpha-GalNAc,IV(2)-alpha-Fuc-nLc4Cer(d18:1(4E)) + H2O = a neolactoside IV(2)-alpha-Fuc-nLc4Cer(d18:1(4E)) + N-acetyl-alpha-D-galactosamine. It catalyses the reaction a neolactoside IV(3)-alpha-GalNAc,IV(2)-alpha-Fuc-nLc4Cer(d18:0) + H2O = a neolactoside IV(2)-alpha-Fuc-nLc4Cer(d18:0) + N-acetyl-alpha-D-galactosamine. It carries out the reaction a globoside IV3GalNAc-Gb4Cer + H2O = N-acetyl-alpha-D-galactosamine + a globoside Gb4Cer. Its function is as follows. Removes terminal alpha-N-acetylgalactosamine residues from glycolipids and glycopeptides. Required for the breakdown of glycolipids. The chain is Alpha-N-acetylgalactosaminidase (Naga) from Rattus norvegicus (Rat).